The following is a 221-amino-acid chain: Vesicle transport v-SNARE 11 (221 aa).

S2 bears the N-acetylserine mark. Over 2–198 (SDVFDGYERQ…MTRRMNKNKW (197 aa)) the chain is Cytoplasmic. The stretch at 32 to 93 (EQKKQKLSEI…FKTEVKRITS (62 aa)) forms a coiled coil. Residues 199-219 (TIGAIIIALIAAIFIILYFKL) form a helical; Anchor for type IV membrane protein membrane-spanning segment. Residues 220–221 (TK) lie on the Vesicular side of the membrane.

It belongs to the VTI1 family. In terms of assembly, forms SNARE complexes with the t-SNAREs SYP51 and either SYP21 or SYP22 in the PVC, and with a much lower affinity with SYP61 in the TGN. Does not interact with SYP41, SYP42 or VPS45. Binds to EPSIN1. Interacts with SCYL2B. Expressed in roots, stems, flowers and leaves.

The protein resides in the golgi apparatus. Its subcellular location is the trans-Golgi network membrane. It localises to the prevacuolar compartment membrane. The protein localises to the vacuole membrane. Functionally, functions as a v-SNARE responsible for targeting AtELP-containing vesicles from the trans-Golgi network (TGN) to the prevacuolar compartment (PVC) and mediates liposome fusion. May be also involved in retrograde traffic to the cis-Golgi. Promotes the formation of vacuolar membrane 'bulbs'. Necessary to deliver proteins to the lytic vacuole, but seems not involved in storage proteins transport. Required for amyloplast sedimentation in the endodermis during shoot gravitropism, which are thus acting as statoliths. Expression in the endodermis is essential for the shoot gravitropic response, whereas expression in other tissues may be responsible for the correct stem and leaf shape. In Arabidopsis thaliana (Mouse-ear cress), this protein is Vesicle transport v-SNARE 11.